Consider the following 365-residue polypeptide: F-box protein At1g48060 (365 aa).

Positions 1 to 20 are disordered; sequence MKPQEEEEKNENMARKRSKS. Residues 20–69 form the F-box domain; the sequence is SSSSLSIPLDIATDIFLRLPAKSVVRFSCVAKHWSSITTAPYFTNSFETR.

In Arabidopsis thaliana (Mouse-ear cress), this protein is F-box protein At1g48060.